The primary structure comprises 399 residues: Alpha-ketoglutarate-dependent dioxygenase fc-dox (399 aa).

Residues His158 and Asp160 each coordinate Fe cation. 2-oxoglutarate is bound at residue Thr203. His355 serves as a coordination point for Fe cation. 2-oxoglutarate is bound at residue Arg367. Residues 371-399 (QGWLAGDRPPKGPVPIPDPRARSSIYYQK) form a disordered region.

The protein belongs to the TfdA dioxygenase family. It depends on Fe(2+) as a cofactor.

The protein operates within mycotoxin biosynthesis. Functionally, alpha-ketoglutarate-dependent dioxygenase; part of the 2 gene clusters that mediate the biosynthesis of fusicoccins, diterpene glucosides that display phytohormone-like activity and function as potent activators of plasma membrane H(+)-ATPases in plants by modifying 14-3-3 proteins and cause the plant disease constriction canker. The first step in the pathway is performed by the fusicoccadiene synthase PaFS that possesses both prenyl transferase and terpene cyclase activity, converting isopentenyl diphosphate and dimethylallyl diphosphate into geranylgeranyl diphosphate (GGDP) and successively converting GGDP into fusicocca-2,10(14)-diene, a precursor for fusicoccin H. The second step is the oxidation at the C-8 position by the cytochrome P450 monooxygenase PaP450-2 to yield fusicocca-2,10(14)-diene-8-beta-ol. The cytochrome P450 monooxygenase PaP450-1 then catalyzes the hydroxylation at the C-16 position to produce fusicocca-2,10(14)-diene-8-beta,16-diol. The dioxygenase fc-dox then catalyzes the 16-oxydation of fusicocca-2,10(14)-diene-8-beta,16-diol to yield an aldehyde (8-beta-hydroxyfusicocca-1,10(14)-dien-16-al). The short-chain dehydrogenase/reductase fc-sdr catalyzes the reduction of the aldehyde to yield fusicocca-1,10(14)-diene-8-beta,16-diol. The next step is the hydroxylation at C-9 performed by the cytochrome P450 monooxygenase PaP450-3 that leads to fusicoccin H aglycon which is glycosylated to fusicoccin H by the O-glycosyltransferase PaGT. Hydroxylation at C-12 by the cytochrome P450 monooxygenase PaP450-4 leads then to the production of fusicoccin Q and is followed by methylation by the O-methyltransferase PaMT to yield fusicoccin P. Fusicoccin P is further converted to fusicoccin J via prenylation by the O-glucose prenyltransferase PaPT. Cytochrome P450 monooxygenase PaP450-5 then performs hydroxylation at C-19 to yield dideacetyl-fusicoccin A which is acetylated to 3'-O-deacetyl-fusicoccin A by the O-acetyltransferase PaAT-2. Finally, a another acetylation by the O-acetyltransferase PaAT-1 yields fusicoccin A. This is Alpha-ketoglutarate-dependent dioxygenase fc-dox from Phomopsis amygdali (Fusicoccum amygdali).